A 157-amino-acid chain; its full sequence is Protein-export protein SecB (157 aa).

This sequence belongs to the SecB family. Homotetramer, a dimer of dimers. One homotetramer interacts with 1 SecA dimer.

The protein localises to the cytoplasm. Its function is as follows. One of the proteins required for the normal export of preproteins out of the cell cytoplasm. It is a molecular chaperone that binds to a subset of precursor proteins, maintaining them in a translocation-competent state. It also specifically binds to its receptor SecA. The protein is Protein-export protein SecB of Photobacterium profundum (strain SS9).